Here is a 210-residue protein sequence, read N- to C-terminus: uncharacterized protein (210 aa).

The region spanning 90-193 (KPDQIIVNEY…RISITFRNVI (104 aa)) is the Fe2OG dioxygenase domain.

This is an uncharacterized protein from Acanthamoeba polyphaga (Amoeba).